Consider the following 249-residue polypeptide: Phosphonates import ATP-binding protein PhnC (249 aa).

The region spanning 2–246 (IEFKKVEKVW…KLNESKLEEI (245 aa)) is the ABC transporter domain. Position 35–42 (35–42 (GLSGAGKT)) interacts with ATP.

This sequence belongs to the ABC transporter superfamily. Phosphonates importer (TC 3.A.1.9.1) family. In terms of assembly, the complex is composed of two ATP-binding proteins (PhnC), two transmembrane proteins (PhnE) and a solute-binding protein (PhnD).

Its subcellular location is the cell membrane. It catalyses the reaction phosphonate(out) + ATP + H2O = phosphonate(in) + ADP + phosphate + H(+). In terms of biological role, part of the ABC transporter complex PhnCDE involved in phosphonates import. Responsible for energy coupling to the transport system. The chain is Phosphonates import ATP-binding protein PhnC from Mesoplasma florum (strain ATCC 33453 / NBRC 100688 / NCTC 11704 / L1) (Acholeplasma florum).